The following is a 435-amino-acid chain: NADH-quinone oxidoreductase subunit D (435 aa).

It belongs to the complex I 49 kDa subunit family. As to quaternary structure, NDH-1 is composed of 14 different subunits. Subunits NuoB, C, D, E, F, and G constitute the peripheral sector of the complex.

The protein resides in the cell inner membrane. It carries out the reaction a quinone + NADH + 5 H(+)(in) = a quinol + NAD(+) + 4 H(+)(out). NDH-1 shuttles electrons from NADH, via FMN and iron-sulfur (Fe-S) centers, to quinones in the respiratory chain. The immediate electron acceptor for the enzyme in this species is believed to be ubiquinone. Couples the redox reaction to proton translocation (for every two electrons transferred, four hydrogen ions are translocated across the cytoplasmic membrane), and thus conserves the redox energy in a proton gradient. This Xylella fastidiosa (strain M23) protein is NADH-quinone oxidoreductase subunit D.